Reading from the N-terminus, the 85-residue chain is UPF0181 protein YPO1774/y2534/YP_1619 (85 aa).

Residues 50 to 85 form a disordered region; the sequence is QAMAIFEDHDFDEHTESDYRRDDEPDADDIEDPYEG. The span at 55–72 shows a compositional bias: basic and acidic residues; the sequence is FEDHDFDEHTESDYRRDD. Residues 73–85 show a composition bias toward acidic residues; it reads EPDADDIEDPYEG.

The protein belongs to the UPF0181 family.

The chain is UPF0181 protein YPO1774/y2534/YP_1619 from Yersinia pestis.